The chain runs to 473 residues: UDP-N-acetylmuramate--L-alanine ligase (473 aa).

123 to 129 (GSHGKTS) contacts ATP.

It belongs to the MurCDEF family.

Its subcellular location is the cytoplasm. The catalysed reaction is UDP-N-acetyl-alpha-D-muramate + L-alanine + ATP = UDP-N-acetyl-alpha-D-muramoyl-L-alanine + ADP + phosphate + H(+). Its pathway is cell wall biogenesis; peptidoglycan biosynthesis. Cell wall formation. The protein is UDP-N-acetylmuramate--L-alanine ligase of Prochlorococcus marinus subsp. pastoris (strain CCMP1986 / NIES-2087 / MED4).